The sequence spans 299 residues: Acetylglutamate kinase (299 aa).

Residues 66-67 (GG), arginine 88, and asparagine 196 each bind substrate.

The protein belongs to the acetylglutamate kinase family. ArgB subfamily.

It is found in the cytoplasm. It catalyses the reaction N-acetyl-L-glutamate + ATP = N-acetyl-L-glutamyl 5-phosphate + ADP. The protein operates within amino-acid biosynthesis; L-arginine biosynthesis; N(2)-acetyl-L-ornithine from L-glutamate: step 2/4. Catalyzes the ATP-dependent phosphorylation of N-acetyl-L-glutamate. This is Acetylglutamate kinase from Alcanivorax borkumensis (strain ATCC 700651 / DSM 11573 / NCIMB 13689 / SK2).